The following is a 328-amino-acid chain: Probable fused nickel transport protein LarMN (328 aa).

The next 8 helical transmembrane spans lie at 8 to 28, 42 to 62, 75 to 95, 103 to 123, 138 to 158, 187 to 207, 229 to 249, and 296 to 316; these read LSPA…TVAV, LPML…NLPI, LLAV…TLLL, GGIL…PFVG, LGLA…AGIE, MLTA…LLVF, PWIA…LASN, and PVSV…LLLI.

It belongs to the CbiM family. NikM subfamily. In terms of assembly, may form an energy-coupling factor (ECF) transporter complex composed of an ATP-binding protein (A component, LarO), a transmembrane protein (T component, LarQ) and a fused possible substrate-capture protein (S component, LarMN) of unknown stoichiometry.

The protein resides in the cell membrane. Its function is as follows. Probably part of the energy-coupling factor (ECF) transporter complex LarMNQO involved in nickel import. In Lactiplantibacillus plantarum (strain ATCC BAA-793 / NCIMB 8826 / WCFS1) (Lactobacillus plantarum), this protein is Probable fused nickel transport protein LarMN.